Consider the following 284-residue polypeptide: Peflin (284 aa).

A disordered region spans residues 1-111 (MASYPYRQGC…QPGLYGQGGA (111 aa)). Residues 8–26 (QGCPGAAGQAPGAPPGSYY) are compositionally biased toward low complexity. A run of 9 repeats spans residues 21–29 (PPGSYYPGP), 31–39 (NSGGQYGSG), 41–49 (PPGGGYGGP), 50–58 (APGGPYGPP), 59–67 (AGGGPYGHP), 76–84 (TPGGPYGGA), 85–92 (APGGPYGQ), 93–100 (PPPSSYGA), and 101–109 (QQPGLYGQG). A 9 X 9 AA approximate tandem repeat of [AP]-P-G-G-P-Y-G-G-P-P region spans residues 21-109 (PPGSYYPGPP…AQQPGLYGQG (89 aa)). A compositionally biased stretch (gly residues) spans 34–50 (GQYGSGLPPGGGYGGPA). A compositionally biased stretch (low complexity) spans 65–75 (GHPNPGMFPSG). A compositionally biased stretch (gly residues) spans 76 to 90 (TPGGPYGGAAPGGPY). EF-hand domains are found at residues 114–149 (NVDP…CNWS), 155–183 (TCLM…WKFI), 181–216 (KFIQ…MGYN), 217–253 (LSPQ…LQVL), and 254–283 (TEAF…ASRM). Asp-127, Asp-129, Ser-131, and Tyr-133 together coordinate Ca(2+). Lys-137 participates in a covalent cross-link: Glycyl lysine isopeptide (Lys-Gly) (interchain with G-Cter in ubiquitin). Ca(2+) is bound at residue Glu-138. Ca(2+)-binding residues include Asp-194, Asp-196, Ser-198, Ser-200, and Glu-205. Residues 204 to 284 (TELQQALSQM…FVTMTASRML (81 aa)) are required for interaction with PDCD6.

As to quaternary structure, heterodimer; heterodimerizes (via the EF-hand 5) with PDCD6. Dissociates from PDCD6 in presence of calcium. Post-translationally, ubiquitinated by the BCR(KLHL12) E3 ubiquitin ligase complex.

The protein resides in the cytoplasm. Its subcellular location is the endoplasmic reticulum. It is found in the membrane. It localises to the cytoplasmic vesicle. The protein localises to the COPII-coated vesicle membrane. Calcium-binding protein that acts as an adapter that bridges unrelated proteins or stabilizes weak protein-protein complexes in response to calcium. Together with PDCD6, acts as a calcium-dependent adapter for the BCR(KLHL12) complex, a complex involved in endoplasmic reticulum (ER)-Golgi transport by regulating the size of COPII coats. In response to cytosolic calcium increase, the heterodimer formed with PDCD6 interacts with, and bridges together the BCR(KLHL12) complex and SEC31 (SEC31A or SEC31B), promoting monoubiquitination of SEC31 and subsequent collagen export, which is required for neural crest specification. Its role in the heterodimer formed with PDCD6 is however unclear: some evidence shows that PEF1 and PDCD6 work together and promote association between PDCD6 and SEC31 in presence of calcium. Other reports show that PEF1 dissociates from PDCD6 in presence of calcium, and may act as a negative regulator of PDCD6. Also acts as a negative regulator of ER-Golgi transport; possibly by inhibiting interaction between PDCD6 and SEC31. This is Peflin from Homo sapiens (Human).